A 771-amino-acid chain; its full sequence is Assimilatory nitrate reductase electron transfer subunit (771 aa).

43 to 79 (YNRILLSSVLQGEASLDDITLNSKDWYDKHGITLYTG) is a binding site for FAD. [2Fe-2S] cluster-binding residues include Cys-414, Cys-416, Cys-449, and Cys-452.

FAD is required as a cofactor. It depends on [2Fe-2S] cluster as a cofactor.

In terms of biological role, required for nitrate assimilation. This chain is Assimilatory nitrate reductase electron transfer subunit (nasB), found in Bacillus subtilis (strain 168).